We begin with the raw amino-acid sequence, 272 residues long: Undecaprenyl-diphosphatase (272 aa).

Helical transmembrane passes span 42-62, 92-112, 120-140, 149-169, 194-214, 224-244, and 252-272; these read FGLS…VVFF, YLVL…EDFF, WVVV…EAVG, MGFA…VPGV, FLMS…EVLA, MFAV…RFFI, and LRAF…LLLL.

The protein belongs to the UppP family.

It localises to the cell membrane. The enzyme catalyses di-trans,octa-cis-undecaprenyl diphosphate + H2O = di-trans,octa-cis-undecaprenyl phosphate + phosphate + H(+). In terms of biological role, catalyzes the dephosphorylation of undecaprenyl diphosphate (UPP). Confers resistance to bacitracin. The sequence is that of Undecaprenyl-diphosphatase from Rubrobacter xylanophilus (strain DSM 9941 / JCM 11954 / NBRC 16129 / PRD-1).